We begin with the raw amino-acid sequence, 140 residues long: UPF0132 membrane protein MJ1527 (140 aa).

3 consecutive transmembrane segments (helical) span residues 40–60 (MEGVLCYLLFWISGLIFLLLE), 70–90 (AMQSFITFLSLNLIAIIVSAI), and 92–112 (IIGWVASTLINIAIIILWIVG).

It belongs to the UPF0132 family.

The protein localises to the cell membrane. The polypeptide is UPF0132 membrane protein MJ1527 (Methanocaldococcus jannaschii (strain ATCC 43067 / DSM 2661 / JAL-1 / JCM 10045 / NBRC 100440) (Methanococcus jannaschii)).